The following is a 356-amino-acid chain: Butyrate kinase (356 aa).

It belongs to the acetokinase family.

The protein resides in the cytoplasm. The catalysed reaction is butanoate + ATP = butanoyl phosphate + ADP. It participates in lipid metabolism; butanoate metabolism. Its function is as follows. Catalyzes the conversion of butyryl-CoA through butyryl phosphate to butyrate. This chain is Butyrate kinase, found in Clostridium tetani (strain Massachusetts / E88).